Reading from the N-terminus, the 623-residue chain is MLMSFILLISTSMILISVFSYVLIALIVLGIVLSLISLLSPRVSYVSSVYLIGLTVYLNPGFSLTQSLINTVPILGEINMLSGLLKTPVTSIISSLFSLALLNLGIKGYEIYLSKHADIVKLDSIIFSQHGLPKQANWNIVVNSEVKLLKSNEKLILSNTPEAKYELCPTLVDHKYYVPNKVTGLAFEGEVIRINYSPVDGVPYEKFRNCFTVFEVEGLPPDTSFVIEINGASLKLKDRKFAKLSLEPLYWKVNEIRISREDEEEIYEPDIKEGLTFRGGTVKINFRRKVIRYKTAKIPSIENWDPGIWVGQEVYGYRVIEVIGLGGNGYVMKVEKNGLLYAMKVLSVNKFTNSLEHFDNLLKESENLEKLSKDPRLVSIYGSFVDKNNIQSALAGDYTSYYKYPPAIIMEFMEGGTLFDLISRVDLVQSKYWQYIVKLVIKEIAKALTFLHKRGYVHLDVKPQNIFLKEKINGEPEVVYKILSSTPGIIKLGDLGSAVRVGEKITQATPAYSPPEQIEAVITGKGAQPSMDNYALGVTLYKLLTMKNLDYVNYLDKAFDEYIKGDPSIAMKYINMAKMSMVNFKPKLPHNTLPELANVVQGTLVVDPKRRLTSYDIVKILEG.

2 helical membrane-spanning segments follow: residues 13–33 (MILI…GIVL) and 49–69 (VYLI…QSLI). The 307-residue stretch at 317-623 (YRVIEVIGLG…SYDIVKILEG (307 aa)) folds into the Protein kinase domain. Residues 323–331 (IGLGGNGYV) and K344 contribute to the ATP site. D460 acts as the Proton acceptor in catalysis.

It belongs to the protein kinase superfamily. Ser/Thr protein kinase family. In terms of processing, autophosphorylated.

The protein localises to the cell membrane. The enzyme catalyses L-seryl-[protein] + ATP = O-phospho-L-seryl-[protein] + ADP + H(+). It carries out the reaction L-threonyl-[protein] + ATP = O-phospho-L-threonyl-[protein] + ADP + H(+). Autophosphorylation is stimulated by Mn(2+). Plays an essential role in the controlled expression of archaellum components during starvation-induced motility. May inhibit arnR transcription and promote ArnR translation. This is Serine/threonine-protein kinase ArnS from Sulfolobus acidocaldarius (strain ATCC 33909 / DSM 639 / JCM 8929 / NBRC 15157 / NCIMB 11770).